The primary structure comprises 416 residues: NADH-quinone oxidoreductase subunit D (416 aa).

The protein belongs to the complex I 49 kDa subunit family. In terms of assembly, NDH-1 is composed of 14 different subunits. Subunits NuoB, C, D, E, F, and G constitute the peripheral sector of the complex.

The protein resides in the cell inner membrane. It carries out the reaction a quinone + NADH + 5 H(+)(in) = a quinol + NAD(+) + 4 H(+)(out). Its function is as follows. NDH-1 shuttles electrons from NADH, via FMN and iron-sulfur (Fe-S) centers, to quinones in the respiratory chain. The immediate electron acceptor for the enzyme in this species is believed to be ubiquinone. Couples the redox reaction to proton translocation (for every two electrons transferred, four hydrogen ions are translocated across the cytoplasmic membrane), and thus conserves the redox energy in a proton gradient. This is NADH-quinone oxidoreductase subunit D from Rhodopseudomonas palustris (strain BisB5).